The primary structure comprises 309 residues: Caspase-7 (309 aa).

Positions 1 to 24 are cleaved as a propeptide — N-terminally processed; that stretch reads MSGDQHADRSSGEKSNGDQDDTVD. Over residues 1–31 the composition is skewed to basic and acidic residues; it reads MSGDQHADRSSGEKSNGDQDDTVDAKPDRSS. Positions 1-53 are disordered; that stretch reads MSGDQHADRSSGEKSNGDQDDTVDAKPDRSSRLSLFAKKKKNGEEEQPKSSLS. The exosite stretch occupies residues 39 to 42; it reads KKKN. Residues 81-92 form a loop L1 region; sequence KNFEDKTGMGTR. Active-site residues include histidine 149 and cysteine 191. Positions 192 to 201 are loop L2; that stretch reads RGSEFDEGIQ. The propeptide occupies 204–214; sequence SGPANDTLETD. Positions 234 to 246 are loop L3; sequence VPGYYSWRNPGRG. The tract at residues 282–296 is loop L4; that stretch reads ESQSDDPRFSEKKQI.

It belongs to the peptidase C14A family. Heterotetramer that consists of two anti-parallel arranged heterodimers, each one formed by a 20 kDa (p20) and a 11 kDa (p11) subunit. Post-translationally, cleavage by different proteases, such as granzyme B (GZMB), caspase-1 (CASP1), caspase-8 (CASP8) or caspase-9 (CASP9) generate the two active subunits. Its involvement in different programmed cell death processes is probably specified by the protease that activates CASP7. Cleaved and activated by initiator caspases (CASP8 and/or CASP9), leading to execution phase of apoptosis. Cleavage and maturation by GZMB regulates granzyme-mediated programmed cell death. Cleaved and activated by CASP1 in response to bacterial infection.

It is found in the cytoplasm. The protein localises to the cytosol. Its subcellular location is the nucleus. The protein resides in the secreted. It localises to the extracellular space. It catalyses the reaction Strict requirement for an Asp residue at position P1 and has a preferred cleavage sequence of Asp-Glu-Val-Asp-|-.. With respect to regulation, during activation, the N-terminal disordered prodomain is removed by cleavage. Concomitantly, double cleavage gives rise to a large Caspase-7 subunit p20 and a small Caspase-7 subunit p11. The two large and two small subunits then assemble to form the active CASP7 complex. Can be cleaved and activated by different caspases, depending on the context. Cleaved and activated by initiator caspases (CASP8 and/or CASP9), leading to execution phase of apoptosis. Cleavage and maturation by GZMB regulates granzyme-mediated programmed cell death. Cleavage and maturation by CASP1 regulates pyroptosis. Inhibited by BIRC6; following inhibition of BIRC6-caspase binding by DIABLO/SMAC, BIRC6 is subjected to caspase cleavage, leading to an increase in active caspases. In terms of biological role, thiol protease involved in different programmed cell death processes, such as apoptosis, pyroptosis or granzyme-mediated programmed cell death, by proteolytically cleaving target proteins. Has a marked preference for Asp-Glu-Val-Asp (DEVD) consensus sequences, with some plasticity for alternate non-canonical sequences. Its involvement in the different programmed cell death processes is probably determined by upstream proteases that activate CASP7. Acts as an effector caspase involved in the execution phase of apoptosis: following cleavage and activation by initiator caspases (CASP8 and/or CASP9), mediates execution of apoptosis by catalyzing cleavage of proteins. Compared to CASP3, acts as a minor executioner caspase and cleaves a limited set of target proteins. Acts as a key regulator of the inflammatory response in response to bacterial infection by catalyzing cleavage and activation of the sphingomyelin phosphodiesterase SMPD1 in the extracellular milieu, thereby promoting membrane repair. Cleaves BIRC6 following inhibition of BIRC6-caspase binding by DIABLO/SMAC. The sequence is that of Caspase-7 from Gallus gallus (Chicken).